Consider the following 372-residue polypeptide: MKIGIPKEIKNNENRVAMTPAGVVSLTHAGHERLAIETGGGIGSSFTDAEYVAAGAAYRCIGKEAWAQEMILKVKEPVASEYDYFYEGQILFTYLHLAPRAELTQALIDKKVVGIAYETVQLANGSLPLLTPMSEVAGKMATQIGAQYLEKNHGGKGILLGGVSGVHARKVTVIGGGIAGTNAAKIAVGMGADVTVIDLSPERLRQLEDMFGRDVQTLMSNPYNIAESVKHSDLVVGAVLIPGAKAPKLVSEEMIQSMQPGSVVVDIAIDQGGIFATSDRVTTHDDPTYVKHGVVHYAVANMPGAVPRTSTIALTNNTIPYALQIANKGYKQACIDNPALKKGVNALEGHITYKAVAEAQGLPYVNVDELIQ.

Substrate contacts are provided by Arg15 and Lys75. His96 serves as the catalytic Proton donor/acceptor. Residues Ser134, 178–179 (IA), Asp198, Ser220, 239–240 (VL), 267–270 (IAID), Arg280, and 299–302 (VANM) contribute to the NAD(+) site. Asp270 acts as the Proton donor/acceptor in catalysis.

Belongs to the AlaDH/PNT family. As to quaternary structure, homohexamer.

Its subcellular location is the cytoplasm. The enzyme catalyses L-alanine + NAD(+) + H2O = pyruvate + NH4(+) + NADH + H(+). Its pathway is amino-acid degradation; L-alanine degradation via dehydrogenase pathway; NH(3) and pyruvate from L-alanine: step 1/1. Its activity is regulated as follows. Inhibited by p-chloromercuribenzoate and HgCl(2) and by Cu(2+) and Pb(2+) salts, unaffected by amino acids such as D-alanine and beta-alanine or by nucleotides or nucleosides. In terms of biological role, catalyzes the reversible reductive amination of pyruvate to L-alanine. Prefers L-alanine for oxidative deamination, other substrates are poorly reactive. In the other direction 2-oxobutyrate is almost as reactive as pyruvate. Ammonia is the sole amino donor for the reductive amination of pyruvate, NADPH is inert. Reductive amination proceeds through a sequential, ordered ternary-binary mechanism, where NADH binds first followed by ammonia and pyruvate; the products are released in the order L-alanine and NAD(+). A key factor in the assimilation of L-alanine as an energy source via the tricarboxylic acid cycle during sporulation. The polypeptide is Alanine dehydrogenase (ald) (Lysinibacillus sphaericus (Bacillus sphaericus)).